The sequence spans 152 residues: Xanthine-guanine phosphoribosyltransferase (152 aa).

Residues 37 to 38 (RG), Arg-69, and 88 to 96 (DDLVDTGGT) contribute to the 5-phospho-alpha-D-ribose 1-diphosphate site. Arg-69 contributes to the GMP binding site. Position 89 (Asp-89) interacts with Mg(2+). Residues Asp-92 and Ile-135 each contribute to the guanine site. 2 residues coordinate xanthine: Asp-92 and Ile-135. GMP is bound by residues 92–96 (DTGGT) and 134–135 (WI).

It belongs to the purine/pyrimidine phosphoribosyltransferase family. XGPT subfamily. Homotetramer. Requires Mg(2+) as cofactor.

The protein localises to the cell inner membrane. It catalyses the reaction GMP + diphosphate = guanine + 5-phospho-alpha-D-ribose 1-diphosphate. It carries out the reaction XMP + diphosphate = xanthine + 5-phospho-alpha-D-ribose 1-diphosphate. The catalysed reaction is IMP + diphosphate = hypoxanthine + 5-phospho-alpha-D-ribose 1-diphosphate. Its pathway is purine metabolism; GMP biosynthesis via salvage pathway; GMP from guanine: step 1/1. It participates in purine metabolism; XMP biosynthesis via salvage pathway; XMP from xanthine: step 1/1. In terms of biological role, purine salvage pathway enzyme that catalyzes the transfer of the ribosyl-5-phosphate group from 5-phospho-alpha-D-ribose 1-diphosphate (PRPP) to the N9 position of the 6-oxopurines guanine and xanthine to form the corresponding ribonucleotides GMP (guanosine 5'-monophosphate) and XMP (xanthosine 5'-monophosphate), with the release of PPi. To a lesser extent, also acts on hypoxanthine. The protein is Xanthine-guanine phosphoribosyltransferase of Edwardsiella ictaluri (strain 93-146).